We begin with the raw amino-acid sequence, 524 residues long: Putative mediator of RNA polymerase II transcription subunit 8 (524 aa).

Coiled coils occupy residues 117 to 146 and 175 to 211; these read LKLHIKSFNDRIDKVDQEFENKIQQISKHK and NAQQQLAQQQQQQATINALQQQQRLLNAQQQQQQQQQ. Disordered stretches follow at residues 312-340, 356-379, and 430-451; these read VASPQQQVTSKQVPIQSTNKPLPQQQPSI, LPNTTSPPVNNNNQSPINSGIGGG, and QQNQQNQQNQQNQQIHQHIQHL. The span at 314 to 333 shows a compositional bias: polar residues; the sequence is SPQQQVTSKQVPIQSTNKPL. Residues 356 to 374 are compositionally biased toward low complexity; the sequence is LPNTTSPPVNNNNQSPINS. Residues 398–478 are a coiled coil; it reads IQQQIQLQQQ…LQQQFQQQQL (81 aa).

It belongs to the Mediator complex subunit 8 family. In terms of assembly, component of the Mediator complex. May be part of a multisubunit E3 ubiquitin-protein ligase complex.

Its subcellular location is the nucleus. It functions in the pathway protein modification; protein ubiquitination. In terms of biological role, component of the Mediator complex, a coactivator involved in the regulated transcription of nearly all RNA polymerase II-dependent genes. Mediator functions as a bridge to convey information from gene-specific regulatory proteins to the basal RNA polymerase II transcription machinery. Mediator is recruited to promoters by direct interactions with regulatory proteins and serves as a scaffold for the assembly of a functional preinitiation complex with RNA polymerase II and the general transcription factors. May play a role as a target recruitment subunit in E3 ubiquitin-protein ligase complexes and thus in ubiquitination and subsequent proteasomal degradation of target proteins. This Dictyostelium discoideum (Social amoeba) protein is Putative mediator of RNA polymerase II transcription subunit 8 (med8).